The following is a 764-amino-acid chain: Myotubularin-related protein 10-B (764 aa).

One can recognise a Myotubularin phosphatase domain in the interval 208 to 649; sequence FESYSDWDRE…THIQIWKLCY (442 aa).

The protein belongs to the protein-tyrosine phosphatase family. Non-receptor class myotubularin subfamily.

This is Myotubularin-related protein 10-B (mtmr10-b) from Xenopus laevis (African clawed frog).